The primary structure comprises 198 residues: Dynein light chain Tctex-type protein 2 (198 aa).

A disordered region spans residues M1–S34. Residues S11–P24 show a composition bias toward polar residues.

It belongs to the dynein light chain Tctex-type family. As to quaternary structure, interacts with CCDC159. Interacts with CSNK2B. As to expression, expressed predominantly in testis. Also expressed in brain, lung and trachea.

It localises to the cytoplasm. Its subcellular location is the cytoskeleton. The protein resides in the cytoplasmic granule. It is found in the membrane. May be an accessory component of axonemal dynein and cytoplasmic dynein 1. Candidate for involvement in male sterility. The protein is Dynein light chain Tctex-type protein 2 of Homo sapiens (Human).